Reading from the N-terminus, the 278-residue chain is Large ribosomal subunit protein uL2 (278 aa).

The interval 201–278 (HGNINDGKAG…IMRSRHQRKK (78 aa)) is disordered. A compositionally biased stretch (basic residues) spans 210-221 (GRSRWRGKKPHV).

This sequence belongs to the universal ribosomal protein uL2 family. Part of the 50S ribosomal subunit. Forms a bridge to the 30S subunit in the 70S ribosome.

Functionally, one of the primary rRNA binding proteins. Required for association of the 30S and 50S subunits to form the 70S ribosome, for tRNA binding and peptide bond formation. It has been suggested to have peptidyltransferase activity; this is somewhat controversial. Makes several contacts with the 16S rRNA in the 70S ribosome. The sequence is that of Large ribosomal subunit protein uL2 from Rhizobium rhizogenes (strain K84 / ATCC BAA-868) (Agrobacterium radiobacter).